The following is a 96-amino-acid chain: Small ribosomal subunit protein bS20 (96 aa).

This sequence belongs to the bacterial ribosomal protein bS20 family.

In terms of biological role, binds directly to 16S ribosomal RNA. The protein is Small ribosomal subunit protein bS20 of Anaplasma marginale (strain St. Maries).